The following is a 736-amino-acid chain: 1,4-alpha-glucan branching enzyme GlgB (736 aa).

The active-site Nucleophile is D415. Residue E468 is the Proton donor of the active site.

The protein belongs to the glycosyl hydrolase 13 family. GlgB subfamily. In terms of assembly, monomer.

The catalysed reaction is Transfers a segment of a (1-&gt;4)-alpha-D-glucan chain to a primary hydroxy group in a similar glucan chain.. It participates in glycan biosynthesis; glycogen biosynthesis. Functionally, catalyzes the formation of the alpha-1,6-glucosidic linkages in glycogen by scission of a 1,4-alpha-linked oligosaccharide from growing alpha-1,4-glucan chains and the subsequent attachment of the oligosaccharide to the alpha-1,6 position. This chain is 1,4-alpha-glucan branching enzyme GlgB, found in Rhodopirellula baltica (strain DSM 10527 / NCIMB 13988 / SH1).